The sequence spans 535 residues: MKFVVITGGVVSGIGKGITTASIGRILRARELEVTAVKIDPYINVDAGTMNPFQHGEVFVTEDGVETDLDLGHYERFMDVTLSGAHNITTGKIYQRVIEKERRGDYLGETVQVIPHITDEIKSWIREVGKASGADVVLVEIGGTVGDIEGMPFYEAVRQLQLEEGRENVMFVHLTYVPYLEHVHELKTKPTQHSVKELRSLGIQPDAIVCRCERPLDDGVKRKIALHTNVPREAVIDAHDVDLVYKVPLLLERQGFGDYICERLGLDADEPDYSDWLDFVTRIEEADDEIRIAVVGKYVDLPDAYISIREALVHAGAHVGVGVDVAWVDSEALEAGDSEAWEEVKDADGVLVPGGFGKRGVEGKIEAVRYARENDVPFLGICLGFQLVVVEYARSVLGLEDAHSTEFNPDTDHPVVDLLPEQRGVKRKGGTMRLGAEPVVLEEGSLLRRLYDDREIVLERHRHRYEVNPSYVRELEDHGLRFSGHSPDGRMEALELPDHPYFVGTQFHPEFKSRPGDPSPPFVGLIKAAAGQGPD.

Residues Met-1–Leu-266 are amidoligase domain. CTP is bound at residue Ser-12. Ser-12 lines the UTP pocket. ATP contacts are provided by residues Gly-13–Ile-18 and Asp-70. Mg(2+)-binding residues include Asp-70 and Glu-140. CTP-binding positions include Asp-147 to Glu-149, Lys-187 to Gln-192, and Lys-223. UTP-binding positions include Lys-187 to Gln-192 and Lys-223. A Glutamine amidotransferase type-1 domain is found at Arg-291–Asp-535. Position 355 (Gly-355) interacts with L-glutamine. The active-site Nucleophile; for glutamine hydrolysis is the Cys-382. Residues Leu-383–Gln-386, Glu-406, and Arg-464 each bind L-glutamine. Active-site residues include His-508 and Glu-510.

This sequence belongs to the CTP synthase family. In terms of assembly, homotetramer.

It catalyses the reaction UTP + L-glutamine + ATP + H2O = CTP + L-glutamate + ADP + phosphate + 2 H(+). It carries out the reaction L-glutamine + H2O = L-glutamate + NH4(+). The catalysed reaction is UTP + NH4(+) + ATP = CTP + ADP + phosphate + 2 H(+). It participates in pyrimidine metabolism; CTP biosynthesis via de novo pathway; CTP from UDP: step 2/2. Its activity is regulated as follows. Allosterically activated by GTP, when glutamine is the substrate; GTP has no effect on the reaction when ammonia is the substrate. The allosteric effector GTP functions by stabilizing the protein conformation that binds the tetrahedral intermediate(s) formed during glutamine hydrolysis. Inhibited by the product CTP, via allosteric rather than competitive inhibition. Its function is as follows. Catalyzes the ATP-dependent amination of UTP to CTP with either L-glutamine or ammonia as the source of nitrogen. Regulates intracellular CTP levels through interactions with the four ribonucleotide triphosphates. The sequence is that of CTP synthase from Methanopyrus kandleri (strain AV19 / DSM 6324 / JCM 9639 / NBRC 100938).